The sequence spans 237 residues: 1-(5-phosphoribosyl)-5-[(5-phosphoribosylamino)methylideneamino] imidazole-4-carboxamide isomerase (237 aa).

The Proton acceptor role is filled by Asp-8. The active-site Proton donor is the Asp-130.

This sequence belongs to the HisA/HisF family.

It localises to the cytoplasm. It carries out the reaction 1-(5-phospho-beta-D-ribosyl)-5-[(5-phospho-beta-D-ribosylamino)methylideneamino]imidazole-4-carboxamide = 5-[(5-phospho-1-deoxy-D-ribulos-1-ylimino)methylamino]-1-(5-phospho-beta-D-ribosyl)imidazole-4-carboxamide. Its pathway is amino-acid biosynthesis; L-histidine biosynthesis; L-histidine from 5-phospho-alpha-D-ribose 1-diphosphate: step 4/9. In Halothermothrix orenii (strain H 168 / OCM 544 / DSM 9562), this protein is 1-(5-phosphoribosyl)-5-[(5-phosphoribosylamino)methylideneamino] imidazole-4-carboxamide isomerase.